Reading from the N-terminus, the 613-residue chain is Spastin (613 aa).

Residues 1–42 (MNSPGGRGKKKGSAGSSSAPPAAGASPSAPSGPAPPAPPAGA) are disordered. The Cytoplasmic portion of the chain corresponds to 1-61 (MNSPGGRGKK…KRNLYYFSYP (61 aa)). The span at 13–29 (SAGSSSAPPAAGASPSA) shows a compositional bias: low complexity. Residues 30-39 (PSGPAPPAPP) show a composition bias toward pro residues. The segment at residues 62–82 (LFAAFALLRFVAFQLGLLVAW) is an intramembrane region (helical). At 83–613 (LCERLSRGAL…WNKDFGDTTV (531 aa)) the chain is on the cytoplasmic side. The 76-residue stretch at 117–192 (HKRAFECISM…AMAKDRLQLL (76 aa)) folds into the MIT domain. The segment at 224-312 (SESGAVPKKK…PAARKKKDTK (89 aa)) is disordered. 3 stretches are compositionally biased toward polar residues: residues 237 to 257 (THTSNSLPRSKTVAKTGSTGL), 264 to 274 (PSYSGISTASV), and 281 to 299 (PATSTHKAAPKNSRTNKPS). 379–386 (GPPGNGKT) is an ATP binding site.

The protein belongs to the AAA ATPase family. Spastin subfamily. Homohexamer. The homohexamer is stabilized by ATP-binding. The homohexamer may adopt a ring conformation through which microtubules pass prior to being severed. Interacts with microtubules.

Its subcellular location is the membrane. It is found in the cytoplasm. It localises to the cytoskeleton. The protein localises to the microtubule organizing center. The protein resides in the centrosome. Its subcellular location is the perinuclear region. It is found in the nucleus. The enzyme catalyses n ATP + n H2O + a microtubule = n ADP + n phosphate + (n+1) alpha/beta tubulin heterodimers.. Functionally, ATP-dependent microtubule severing protein that specifically recognizes and cuts microtubules that are polyglutamylated. Preferentially recognizes and acts on microtubules decorated with short polyglutamate tails: severing activity increases as the number of glutamates per tubulin rises from one to eight, but decreases beyond this glutamylation threshold. Microtubule severing promotes reorganization of cellular microtubule arrays and the release of microtubules from the centrosome following nucleation. Required for membrane traffic from the endoplasmic reticulum (ER) to the Golgi and for completion of the abscission stage of cytokinesis. Also plays a role in axon growth and the formation of axonal branches. The polypeptide is Spastin (Gallus gallus (Chicken)).